A 624-amino-acid polypeptide reads, in one-letter code: Protein POLLEN DEFECTIVE IN GUIDANCE 1 (624 aa).

Positions 20-63 (SFENDDTSIRRSSSDPITGNVASESPRDYGKRKRSKKKKKKVNQ) are disordered. Residues 33-42 (SDPITGNVAS) are compositionally biased toward polar residues. A compositionally biased stretch (basic residues) spans 49-61 (GKRKRSKKKKKKV). 6 helical membrane passes run 263 to 283 (VLID…LTVM), 305 to 325 (ASEL…ILLG), 391 to 411 (FVSD…ILLA), 413 to 433 (AITL…LLVS), 545 to 565 (LTFV…PVYA), and 578 to 598 (LWMV…KVLI).

Belongs to the TAPT1 family. Interacts with CRT3, but not with CRT1 or CNX. In terms of tissue distribution, expressed in inflorescences, siliques, roots and shoots. Expressed in early embryo, endosperm, mature pollen and pollen tubes, synergide cells and weakly in antipodal cells.

The protein localises to the membrane. Its subcellular location is the endoplasmic reticulum lumen. In terms of biological role, probable component of the calreticulin 3 (CRT3) complex, acting probably as a co-chaperone involved in protein retention in the endoplasmic reticulum lumen. Required for micropylar pollen tube guidance. Plays an essential role in cell plate orientation or positioning in early embryo patterning. The sequence is that of Protein POLLEN DEFECTIVE IN GUIDANCE 1 (POD1) from Arabidopsis thaliana (Mouse-ear cress).